A 642-amino-acid polypeptide reads, in one-letter code: Kinesin-like protein KIF12 (642 aa).

A compositionally biased stretch (basic and acidic residues) spans 1–13 (MEERGSPDGDPAR). The interval 1-25 (MEERGSPDGDPARNLEQGPEGSETP) is disordered. Serine 6 carries the phosphoserine modification. The 336-residue stretch at 25–360 (PIQVVLRVRP…LRYASRAQRI (336 aa)) folds into the Kinesin motor domain. Position 104-111 (104-111 (GQTGSGKT)) interacts with ATP. At serine 369 the chain carries Phosphoserine. A coiled-coil region spans residues 376–465 (QQVENELLRL…QVHDLERRLL (90 aa)). Disordered regions lie at residues 531–561 (GHIS…SQSD) and 579–642 (PSAP…LSSC). Residues 538-548 (WPPPWAPPPSP) show a composition bias toward pro residues. Residues 610 to 642 (TLTQQINSSLHLSQRQPQPSEDTQSPGQGLSSC) are compositionally biased toward polar residues. Serine 634 is modified (phosphoserine).

The protein belongs to the TRAFAC class myosin-kinesin ATPase superfamily. Kinesin family. As to expression, expressed in the liver.

It is found in the cytoplasm. It localises to the cytoskeleton. This Mus musculus (Mouse) protein is Kinesin-like protein KIF12 (Kif12).